The chain runs to 151 residues: Large ribosomal subunit protein bL9 (151 aa).

The protein belongs to the bacterial ribosomal protein bL9 family.

Binds to the 23S rRNA. This is Large ribosomal subunit protein bL9 from Francisella tularensis subsp. holarctica (strain LVS).